Consider the following 696-residue polypeptide: Lutropin-choriogonadotropic hormone receptor (696 aa).

An N-terminal signal peptide occupies residues 1–27; that stretch reads MRRRSLALRLLLALLLLPPPLPQTLLG. Residues 28-358 are Extracellular-facing; that stretch reads APCPEPCSCR…AFNPCEDIMG (331 aa). Residue Asn-99 is glycosylated (N-linked (GlcNAc...) asparagine). 6 LRR repeats span residues 122–147, 149–171, 172–196, 198–220, 221–244, and 250–271; these read LPRLKYLSICNTGIRKLPDVTKIFSS, FNFILEICDNLHITTVPANAFQG, MNNESITLKLYGNGFEEIQSHAFNG, TLISLELKENAHLKKMHNDAFRG, ARGPSILDISSTKLQALPSYGLES, and ATSSYSLKKLPSREKFTNLLDA. 2 N-linked (GlcNAc...) asparagine glycosylation sites follow: Asn-174 and Asn-195. Asn-291, Asn-299, and Asn-313 each carry an N-linked (GlcNAc...) asparagine glycan. Tyr-331 bears the Sulfotyrosine mark. Residues 359–386 form a helical membrane-spanning segment; it reads YDFLRVLIWLINILAIMGNVTVLFVLLT. The Cytoplasmic portion of the chain corresponds to 387 to 395; the sequence is SHYKLTVPR. The chain crosses the membrane as a helical span at residues 396–418; it reads FLMCNLSFADFCMGLYLLLIASV. The Extracellular portion of the chain corresponds to 419 to 439; it reads DAQTKGQYYNHAIDWQTGNGC. Cys-439 and Cys-514 form a disulfide bridge. Residues 440 to 462 form a helical membrane-spanning segment; the sequence is SVAGFFTVFASELSVYTLTVITL. At 463-482 the chain is on the cytoplasmic side; it reads ERWHTITYAIQLDQKLRLRH. The chain crosses the membrane as a helical span at residues 483-505; sequence AIPIMLGGWLFSTLIAMLPLVGV. The Extracellular portion of the chain corresponds to 506–525; that stretch reads SSYMKVSICLPMDVETTLSQ. Residues 526–547 form a helical membrane-spanning segment; that stretch reads VYILTILILNVVAFIIICACYI. The Cytoplasmic portion of the chain corresponds to 548 to 570; it reads KIYFAVQNPELMATNKDTKIAKK. The helical transmembrane segment at 571 to 594 threads the bilayer; it reads MAVLIFTDFTCMAPISFFAISAAL. The Extracellular portion of the chain corresponds to 595 to 605; it reads KVPLITVTNSK. Residues 606-626 traverse the membrane as a helical segment; that stretch reads VLLVLFYPVNSCANPFLYAIF. Residues 627 to 696 lie on the Cytoplasmic side of the membrane; sequence TKAFRRDFFL…VMDKTCYKDC (70 aa). Residues Cys-643 and Cys-644 are each lipidated (S-palmitoyl cysteine).

Belongs to the G-protein coupled receptor 1 family. FSH/LSH/TSH subfamily. Sulfated.

It localises to the cell membrane. Functionally, receptor for lutropin-choriogonadotropic hormone. The activity of this receptor is mediated by G proteins which activate adenylate cyclase. The chain is Lutropin-choriogonadotropic hormone receptor (LHCGR) from Sus scrofa (Pig).